The following is a 552-amino-acid chain: Chaperonin GroEL 1 (552 aa).

Residues 30 to 33 (TLGP), Lys51, 87 to 91 (DGTTT), Gly415, 479 to 481 (NAA), and Asp495 contribute to the ATP site.

Belongs to the chaperonin (HSP60) family. In terms of assembly, forms a cylinder of 14 subunits composed of two heptameric rings stacked back-to-back. Interacts with the co-chaperonin GroES.

It is found in the cytoplasm. It catalyses the reaction ATP + H2O + a folded polypeptide = ADP + phosphate + an unfolded polypeptide.. Its function is as follows. Together with its co-chaperonin GroES, plays an essential role in assisting protein folding. The GroEL-GroES system forms a nano-cage that allows encapsulation of the non-native substrate proteins and provides a physical environment optimized to promote and accelerate protein folding. This is Chaperonin GroEL 1 from Albidiferax ferrireducens (strain ATCC BAA-621 / DSM 15236 / T118) (Rhodoferax ferrireducens).